Here is a 340-residue protein sequence, read N- to C-terminus: KRR1 small subunit processome component homolog (340 aa).

The KH domain maps to 124-192 (DIIKIGNLVH…VRDIVLETMN (69 aa)). The span at 228-244 (KNKNISKRKQPKSKKPK) shows a compositional bias: basic residues. 2 disordered regions span residues 228–259 (KNKN…ESKI) and 271–324 (NQEQ…KVDV). Positions 269 to 302 (FLNQEQKQAKRNQERSAKQADAAKKQDERRNKDF) form a coiled coil. 2 stretches are compositionally biased toward basic and acidic residues: residues 275–301 (KQAK…RNKD) and 309–324 (APSR…KVDV).

It belongs to the KRR1 family. As to quaternary structure, monomer. Component of the ribosomal small subunit (SSU) processome.

It is found in the nucleus. The protein resides in the nucleolus. Functionally, required for 40S ribosome biogenesis. Involved in nucleolar processing of pre-18S ribosomal RNA and ribosome assembly. Binds to RNA. Required for female germline development, cell viability during eye development and for survival of dividing cells and epithelial cells during early wing disk development. This is KRR1 small subunit processome component homolog from Drosophila persimilis (Fruit fly).